Consider the following 43-residue polypeptide: Defensin, isoforms B and C (43 aa).

3 cysteine pairs are disulfide-bonded: C3–C34, C20–C40, and C24–C42.

It belongs to the invertebrate defensin family. Type 1 subfamily.

The protein resides in the secreted. Functionally, involved in anti Gram-positive activity of immune hemolymph of Z.atratus. The chain is Defensin, isoforms B and C from Zophobas atratus (Giant mealworm beetle).